A 1177-amino-acid chain; its full sequence is Transcription-repair-coupling factor (1177 aa).

A Helicase ATP-binding domain is found at 638–799; the sequence is DMERERPMDR…MLGVRDLSVI (162 aa). 651–658 contacts ATP; sequence GDVGYGKT. Positions 752–755 match the DEEQ box motif; it reads DEEQ. The region spanning 820–974 is the Helicase C-terminal domain; the sequence is LVREAIEREL…GFKIAMRDLT (155 aa).

It in the N-terminal section; belongs to the UvrB family. This sequence in the C-terminal section; belongs to the helicase family. RecG subfamily.

Its subcellular location is the cytoplasm. Its function is as follows. Couples transcription and DNA repair by recognizing RNA polymerase (RNAP) stalled at DNA lesions. Mediates ATP-dependent release of RNAP and its truncated transcript from the DNA, and recruitment of nucleotide excision repair machinery to the damaged site. Probably required to repair non-bulky DNA lesions. The protein is Transcription-repair-coupling factor of Bacillus subtilis (strain 168).